Here is a 498-residue protein sequence, read N- to C-terminus: ATP synthase subunit beta, chloroplastic (498 aa).

An ATP-binding site is contributed by 172 to 179; the sequence is GGAGVGKT.

The protein belongs to the ATPase alpha/beta chains family. As to quaternary structure, F-type ATPases have 2 components, CF(1) - the catalytic core - and CF(0) - the membrane proton channel. CF(1) has five subunits: alpha(3), beta(3), gamma(1), delta(1), epsilon(1). CF(0) has four main subunits: a(1), b(1), b'(1) and c(9-12).

It localises to the plastid. Its subcellular location is the chloroplast thylakoid membrane. The catalysed reaction is ATP + H2O + 4 H(+)(in) = ADP + phosphate + 5 H(+)(out). Its function is as follows. Produces ATP from ADP in the presence of a proton gradient across the membrane. The catalytic sites are hosted primarily by the beta subunits. The sequence is that of ATP synthase subunit beta, chloroplastic from Platanus occidentalis (Sycamore).